We begin with the raw amino-acid sequence, 432 residues long: 3-phosphoshikimate 1-carboxyvinyltransferase (432 aa).

3-phosphoshikimate contacts are provided by lysine 22, serine 23, and arginine 27. Lysine 22 provides a ligand contact to phosphoenolpyruvate. Phosphoenolpyruvate-binding residues include glycine 96 and arginine 127. Positions 173, 174, 175, 201, 317, 340, and 344 each coordinate 3-phosphoshikimate. Glutamine 175 contributes to the phosphoenolpyruvate binding site. Aspartate 317 (proton acceptor) is an active-site residue. Arginine 348, arginine 392, and lysine 417 together coordinate phosphoenolpyruvate.

This sequence belongs to the EPSP synthase family. As to quaternary structure, monomer.

Its subcellular location is the cytoplasm. The catalysed reaction is 3-phosphoshikimate + phosphoenolpyruvate = 5-O-(1-carboxyvinyl)-3-phosphoshikimate + phosphate. Its pathway is metabolic intermediate biosynthesis; chorismate biosynthesis; chorismate from D-erythrose 4-phosphate and phosphoenolpyruvate: step 6/7. Functionally, catalyzes the transfer of the enolpyruvyl moiety of phosphoenolpyruvate (PEP) to the 5-hydroxyl of shikimate-3-phosphate (S3P) to produce enolpyruvyl shikimate-3-phosphate and inorganic phosphate. This Mannheimia haemolytica (Pasteurella haemolytica) protein is 3-phosphoshikimate 1-carboxyvinyltransferase.